A 367-amino-acid polypeptide reads, in one-letter code: Inner membrane amino-acid ABC transporter permease protein YhdY (367 aa).

Residues 1–36 are Cytoplasmic-facing; sequence MTKVLLSHPPRPASHNSSRAMVWVRKNLFSSWSNSL. A helical membrane pass occupies residues 37–57; that stretch reads LTIGCIWLMWELIPPLLNWAF. Residues 58-99 are Periplasmic-facing; sequence LQANWVGSTRADCTKAGACWVFIHERFGQFMYGLYPHDQRWR. A helical membrane pass occupies residues 100 to 120; the sequence is INLALLIGLVSIAPMFWKILP. At 121 to 125 the chain is on the cytoplasmic side; that stretch reads HRGRY. The helical transmembrane segment at 126 to 146 threads the bilayer; that stretch reads IAAWAVIYPLIVWWLMYGGFF. Residues 147-162 lie on the Periplasmic side of the membrane; the sequence is ALERVETRQWGGLTLT. In terms of domain architecture, ABC transmembrane type-1 spans 159–353; sequence LTLTLIIASV…IFCFSMSRYS (195 aa). The helical transmembrane segment at 163–183 threads the bilayer; it reads LIIASVGIAGALPWGILLALG. Residues 184–192 are Cytoplasmic-facing; that stretch reads RRSHMPIVR. A helical transmembrane segment spans residues 193–213; that stretch reads ILSVIFIEFWRGVPLITVLFM. Residues 214–233 lie on the Periplasmic side of the membrane; that stretch reads SSVMLPLFMAEGTSIDKLIR. Residues 234 to 254 traverse the membrane as a helical segment; sequence ALVGVILFQSAYVAEVVRGGL. The Cytoplasmic portion of the chain corresponds to 255-291; that stretch reads QALPKGQYEAAESLALGYWKTQGLVILPQALKLVIPG. The helical transmembrane segment at 292–312 threads the bilayer; that stretch reads LVNTIIALFKDTSLVIIIGLF. At 313 to 326 the chain is on the periplasmic side; that stretch reads DLFSSVQQATVDPA. Residues 327 to 347 traverse the membrane as a helical segment; that stretch reads WLGMSTEGYVFAALIYWIFCF. The Cytoplasmic segment spans residues 348 to 367; the sequence is SMSRYSQYLEKRFNTGRTPH.

It belongs to the binding-protein-dependent transport system permease family. HisMQ subfamily.

It is found in the cell inner membrane. In terms of biological role, probably part of the binding-protein-dependent transport system YdhWXYZ for an amino acid; probably responsible for the translocation of the substrate across the membrane. This Escherichia coli (strain K12) protein is Inner membrane amino-acid ABC transporter permease protein YhdY (yhdY).